The sequence spans 218 residues: Cell division protein SepF (218 aa).

The disordered stretch occupies residues 24 to 115 (EDVTASTDNV…IANRREQYQQ (92 aa)). A compositionally biased stretch (polar residues) spans 28–43 (ASTDNVIPRSQQSVRA). Over residues 47-63 (PKQEPRNNHVQQDHQAR) the composition is skewed to basic and acidic residues.

The protein belongs to the SepF family. As to quaternary structure, homodimer. Interacts with FtsZ.

Its subcellular location is the cytoplasm. Its function is as follows. Cell division protein that is part of the divisome complex and is recruited early to the Z-ring. Probably stimulates Z-ring formation, perhaps through the cross-linking of FtsZ protofilaments. Its function overlaps with FtsA. The polypeptide is Cell division protein SepF (Streptococcus pyogenes serotype M4 (strain MGAS10750)).